Reading from the N-terminus, the 203-residue chain is Protein GrpE (203 aa).

It belongs to the GrpE family. Homodimer.

The protein localises to the cytoplasm. In terms of biological role, participates actively in the response to hyperosmotic and heat shock by preventing the aggregation of stress-denatured proteins, in association with DnaK and GrpE. It is the nucleotide exchange factor for DnaK and may function as a thermosensor. Unfolded proteins bind initially to DnaJ; upon interaction with the DnaJ-bound protein, DnaK hydrolyzes its bound ATP, resulting in the formation of a stable complex. GrpE releases ADP from DnaK; ATP binding to DnaK triggers the release of the substrate protein, thus completing the reaction cycle. Several rounds of ATP-dependent interactions between DnaJ, DnaK and GrpE are required for fully efficient folding. In Pseudoalteromonas translucida (strain TAC 125), this protein is Protein GrpE.